The following is a 368-amino-acid chain: Chaperone protein DnaJ (368 aa).

Positions 5–70 constitute a J domain; the sequence is DYYEVLGVSK…EKRSMYDRMG (66 aa). Residues 132–210 form a CR-type zinc finger; that stretch reads GVKKTITFTA…CHGSGVADRQ (79 aa). Zn(2+) contacts are provided by Cys145, Cys148, Cys162, Cys165, Cys184, Cys187, Cys198, and Cys201. CXXCXGXG motif repeat units follow at residues 145–152, 162–169, 184–191, and 198–205; these read CEVCDGKG, CRTCHGTG, CGTCRGQG, and CQSCHGSG. The tract at residues 349–368 is disordered; that stretch reads DGDEHSSSPKKKSFFDRLFD. The segment covering 350 to 368 has biased composition (basic and acidic residues); sequence GDEHSSSPKKKSFFDRLFD.

Belongs to the DnaJ family. In terms of assembly, homodimer. Requires Zn(2+) as cofactor.

Its subcellular location is the cytoplasm. Its function is as follows. Participates actively in the response to hyperosmotic and heat shock by preventing the aggregation of stress-denatured proteins and by disaggregating proteins, also in an autonomous, DnaK-independent fashion. Unfolded proteins bind initially to DnaJ; upon interaction with the DnaJ-bound protein, DnaK hydrolyzes its bound ATP, resulting in the formation of a stable complex. GrpE releases ADP from DnaK; ATP binding to DnaK triggers the release of the substrate protein, thus completing the reaction cycle. Several rounds of ATP-dependent interactions between DnaJ, DnaK and GrpE are required for fully efficient folding. Also involved, together with DnaK and GrpE, in the DNA replication of plasmids through activation of initiation proteins. In Acinetobacter baylyi (strain ATCC 33305 / BD413 / ADP1), this protein is Chaperone protein DnaJ.